A 486-amino-acid chain; its full sequence is Cardiolipin synthase A (486 aa).

A run of 2 helical transmembrane segments spans residues 3–23 (TVYTLVSWLAILGYWLLIAGV) and 38–58 (MAWLLIIYILPLVGIIAYLAV). 2 PLD phosphodiesterase domains span residues 219 to 246 (MDLRQHRKMIMIDNYIAYTGSMNMVDPR) and 399 to 426 (EGGLLHTKSVLVDGELSLVGTVNLDMRS). Catalysis depends on residues His224, Lys226, Asp231, His404, Lys406, and Asp411.

This sequence belongs to the phospholipase D family. Cardiolipin synthase subfamily. ClsA sub-subfamily.

Its subcellular location is the cell inner membrane. The catalysed reaction is 2 a 1,2-diacyl-sn-glycero-3-phospho-(1'-sn-glycerol) = a cardiolipin + glycerol. In terms of biological role, catalyzes the reversible phosphatidyl group transfer from one phosphatidylglycerol molecule to another to form cardiolipin (CL) (diphosphatidylglycerol) and glycerol. This is Cardiolipin synthase A from Shigella dysenteriae serotype 1 (strain Sd197).